Here is a 308-residue protein sequence, read N- to C-terminus: Porphobilinogen deaminase (308 aa).

Position 243 is an S-(dipyrrolylmethanemethyl)cysteine (Cys243).

The protein belongs to the HMBS family. In terms of assembly, monomer. Dipyrromethane is required as a cofactor.

It catalyses the reaction 4 porphobilinogen + H2O = hydroxymethylbilane + 4 NH4(+). The protein operates within porphyrin-containing compound metabolism; protoporphyrin-IX biosynthesis; coproporphyrinogen-III from 5-aminolevulinate: step 2/4. In terms of biological role, tetrapolymerization of the monopyrrole PBG into the hydroxymethylbilane pre-uroporphyrinogen in several discrete steps. In Nitrosomonas europaea (strain ATCC 19718 / CIP 103999 / KCTC 2705 / NBRC 14298), this protein is Porphobilinogen deaminase.